We begin with the raw amino-acid sequence, 262 residues long: Cerebellar degeneration-related antigen 1 (262 aa).

34 consecutive repeat copies span residues 3 to 8, 9 to 14, 15 to 20, 21 to 26, 27 to 32, 33 to 38, 39 to 44, 45 to 50, 51 to 56, 57 to 62, 63 to 68, 69 to 74, 75 to 80, 81 to 86, 87 to 92, 93 to 98, 99 to 104, 105 to 110, 111 to 116, 117 to 122, 123 to 128, 129 to 134, 135 to 140, 141 to 146, 147 to 152, 153 to 158, 159 to 164, 165 to 170, 171 to 176, 177 to 182, 183 to 188, 189 to 194, 195 to 200, and 201 to 206. Residues 3–140 are 23 X 6 AA approximate repeats; the sequence is WLEDVDFLED…EDLEAIGRCG (138 aa). The segment at 141–176 is 6 X 6 AA approximate repeats; it reads FSGRHGFFGRRRFSGRPKLSGRLGLLGRRGFSGRLG. Residues 177–206 form a 5 X 6 AA approximate repeats region; the sequence is GYWKTWIFWKTWIFWKTWIFRKTYIGWKTW.

As to expression, brain; predominantly expressed in normal neuroectodermal tissues and in certain malignant tumors.

The protein is Cerebellar degeneration-related antigen 1 (CDR1) of Homo sapiens (Human).